Consider the following 448-residue polypeptide: UDP-N-acetylmuramate--L-alanine ligase (448 aa).

Residue 118-124 (GTHGKTT) participates in ATP binding.

It belongs to the MurCDEF family.

The protein resides in the cytoplasm. The catalysed reaction is UDP-N-acetyl-alpha-D-muramate + L-alanine + ATP = UDP-N-acetyl-alpha-D-muramoyl-L-alanine + ADP + phosphate + H(+). It functions in the pathway cell wall biogenesis; peptidoglycan biosynthesis. Functionally, cell wall formation. This is UDP-N-acetylmuramate--L-alanine ligase from Flavobacterium psychrophilum (strain ATCC 49511 / DSM 21280 / CIP 103535 / JIP02/86).